A 171-amino-acid chain; its full sequence is Putative phosphoesterase BPUM_1117 (171 aa).

The Proton donor role is filled by His-34. 2 short sequence motifs (HXTX) span residues 34-37 (HLTL) and 115-118 (HVTV). Residue His-115 is the Proton acceptor of the active site.

It belongs to the 2H phosphoesterase superfamily. YjcG family.

The polypeptide is Putative phosphoesterase BPUM_1117 (Bacillus pumilus (strain SAFR-032)).